A 63-amino-acid chain; its full sequence is ATP synthase F(0) complex subunit 8 (63 aa).

Residues 8-24 (TWFLTILSVMLTLFTLL) form a helical membrane-spanning segment. Residue Lys57 is modified to N6-acetyllysine.

The protein belongs to the ATPase protein 8 family. As to quaternary structure, component of the ATP synthase complex composed at least of ATP5F1A/subunit alpha, ATP5F1B/subunit beta, ATP5MC1/subunit c (homooctomer), MT-ATP6/subunit a, MT-ATP8/subunit 8, ATP5ME/subunit e, ATP5MF/subunit f, ATP5MG/subunit g, ATP5MK/subunit k, ATP5MJ/subunit j, ATP5F1C/subunit gamma, ATP5F1D/subunit delta, ATP5F1E/subunit epsilon, ATP5PF/subunit F6, ATP5PB/subunit b, ATP5PD/subunit d, ATP5PO/subunit OSCP. ATP synthase complex consists of a soluble F(1) head domain (subunits alpha(3) and beta(3)) - the catalytic core - and a membrane F(0) domain - the membrane proton channel (subunits c, a, 8, e, f, g, k and j). These two domains are linked by a central stalk (subunits gamma, delta, and epsilon) rotating inside the F1 region and a stationary peripheral stalk (subunits F6, b, d, and OSCP). Interacts with PRICKLE3.

The protein resides in the mitochondrion membrane. Functionally, subunit 8, of the mitochondrial membrane ATP synthase complex (F(1)F(0) ATP synthase or Complex V) that produces ATP from ADP in the presence of a proton gradient across the membrane which is generated by electron transport complexes of the respiratory chain. ATP synthase complex consist of a soluble F(1) head domain - the catalytic core - and a membrane F(1) domain - the membrane proton channel. These two domains are linked by a central stalk rotating inside the F(1) region and a stationary peripheral stalk. During catalysis, ATP synthesis in the catalytic domain of F(1) is coupled via a rotary mechanism of the central stalk subunits to proton translocation. In vivo, can only synthesize ATP although its ATP hydrolase activity can be activated artificially in vitro. Part of the complex F(0) domain. This is ATP synthase F(0) complex subunit 8 from Physeter macrocephalus (Sperm whale).